Reading from the N-terminus, the 156-residue chain is ATP synthase subunit b', organellar chromatophore (156 aa).

A helical membrane pass occupies residues 23–43 (TLPLMAIQVVFLTFILNAIFF).

It belongs to the ATPase B chain family. F-type ATPases have 2 components, F(1) - the catalytic core - and F(0) - the membrane proton channel. F(1) has five subunits: alpha(3), beta(3), gamma(1), delta(1), epsilon(1). F(0) has four main subunits: a(1), b(1), b'(1) and c(10-14). The alpha and beta chains form an alternating ring which encloses part of the gamma chain. F(1) is attached to F(0) by a central stalk formed by the gamma and epsilon chains, while a peripheral stalk is formed by the delta, b and b' chains.

The protein resides in the plastid. It is found in the organellar chromatophore thylakoid membrane. Functionally, f(1)F(0) ATP synthase produces ATP from ADP in the presence of a proton or sodium gradient. F-type ATPases consist of two structural domains, F(1) containing the extramembraneous catalytic core and F(0) containing the membrane proton channel, linked together by a central stalk and a peripheral stalk. During catalysis, ATP synthesis in the catalytic domain of F(1) is coupled via a rotary mechanism of the central stalk subunits to proton translocation. Component of the F(0) channel, it forms part of the peripheral stalk, linking F(1) to F(0). The b'-subunit is a diverged and duplicated form of b found in plants and photosynthetic bacteria. The sequence is that of ATP synthase subunit b', organellar chromatophore from Paulinella chromatophora.